The following is a 262-amino-acid chain: Putative hydroxypyruvate isomerase (262 aa).

Catalysis depends on proton donor/acceptor residues glutamate 146 and glutamate 244.

The protein belongs to the hyi family.

The catalysed reaction is 3-hydroxypyruvate = 2-hydroxy-3-oxopropanoate. Functionally, catalyzes the reversible isomerization between hydroxypyruvate and 2-hydroxy-3-oxopropanoate (also termed tartronate semialdehyde). The chain is Putative hydroxypyruvate isomerase from Caenorhabditis elegans.